We begin with the raw amino-acid sequence, 101 residues long: Class II hydrophobin 5 (101 aa).

Residues 1–15 (MQLTALLALATLAIA) form the signal peptide. 4 cysteine pairs are disulfide-bonded: cysteine 33–cysteine 83, cysteine 44–cysteine 74, cysteine 45–cysteine 57, and cysteine 84–cysteine 95.

This sequence belongs to the cerato-ulmin hydrophobin family. In terms of assembly, homodimer. Homodimers further self-assemble to form highly ordered films at water-air interfaces through intermolecular interactions.

It is found in the secreted. Its subcellular location is the cell wall. Aerial growth, conidiation, and dispersal of filamentous fungi in the environment rely upon a capability of their secreting small amphipathic proteins called hydrophobins (HPBs) with low sequence identity. Class I can self-assemble into an outermost layer of rodlet bundles on aerial cell surfaces, conferring cellular hydrophobicity that supports fungal growth, development and dispersal; whereas Class II form highly ordered films at water-air interfaces through intermolecular interactions but contribute nothing to the rodlet structure. The sequence is that of Class II hydrophobin 5 from Trichoderma asperellum (strain ATCC 204424 / CBS 433.97 / NBRC 101777).